The following is a 188-amino-acid chain: Phosphatidylinositol N-acetylglucosaminyltransferase subunit H (188 aa).

Belongs to the PIGH family. Component of the glycosylphosphatidylinositol-N-acetylglucosaminyltransferase (GPI-GnT) complex composed at least by PIGA, PIGC, PIGH, PIGP, PIGQ, PIGY and DPM2. Interacts with PIGQ.

It is found in the cytoplasm. Its pathway is glycolipid biosynthesis; glycosylphosphatidylinositol-anchor biosynthesis. Part of the glycosylphosphatidylinositol-N-acetylglucosaminyltransferase (GPI-GnT) complex that catalyzes the transfer of N-acetylglucosamine from UDP-N-acetylglucosamine to phosphatidylinositol and participates in the first step of GPI biosynthesis. The polypeptide is Phosphatidylinositol N-acetylglucosaminyltransferase subunit H (Bos taurus (Bovine)).